Consider the following 215-residue polypeptide: 3-isopropylmalate dehydratase small subunit (215 aa).

Belongs to the LeuD family. LeuD type 1 subfamily. Heterodimer of LeuC and LeuD.

It catalyses the reaction (2R,3S)-3-isopropylmalate = (2S)-2-isopropylmalate. It functions in the pathway amino-acid biosynthesis; L-leucine biosynthesis; L-leucine from 3-methyl-2-oxobutanoate: step 2/4. Functionally, catalyzes the isomerization between 2-isopropylmalate and 3-isopropylmalate, via the formation of 2-isopropylmaleate. This chain is 3-isopropylmalate dehydratase small subunit, found in Xanthomonas campestris pv. campestris (strain 8004).